Here is a 921-residue protein sequence, read N- to C-terminus: Isoleucine--tRNA ligase (921 aa).

A 'HIGH' region motif is present at residues 57 to 67; it reads PYANGELHMGH. Glu552 lines the L-isoleucyl-5'-AMP pocket. Positions 593 to 597 match the 'KMSKS' region motif; that stretch reads KMSKS. Lys596 is an ATP binding site. 4 residues coordinate Zn(2+): Cys888, Cys891, Cys908, and Cys911.

It belongs to the class-I aminoacyl-tRNA synthetase family. IleS type 1 subfamily. As to quaternary structure, monomer. Zn(2+) is required as a cofactor.

The protein localises to the cytoplasm. The catalysed reaction is tRNA(Ile) + L-isoleucine + ATP = L-isoleucyl-tRNA(Ile) + AMP + diphosphate. Functionally, catalyzes the attachment of isoleucine to tRNA(Ile). As IleRS can inadvertently accommodate and process structurally similar amino acids such as valine, to avoid such errors it has two additional distinct tRNA(Ile)-dependent editing activities. One activity is designated as 'pretransfer' editing and involves the hydrolysis of activated Val-AMP. The other activity is designated 'posttransfer' editing and involves deacylation of mischarged Val-tRNA(Ile). The protein is Isoleucine--tRNA ligase of Listeria welshimeri serovar 6b (strain ATCC 35897 / DSM 20650 / CCUG 15529 / CIP 8149 / NCTC 11857 / SLCC 5334 / V8).